Consider the following 629-residue polypeptide: 1-deoxy-D-xylulose-5-phosphate synthase (629 aa).

Thiamine diphosphate contacts are provided by residues H72 and 113 to 115; that span reads GHA. Residue D144 participates in Mg(2+) binding. Residues 145–146, N174, Y287, and E370 contribute to the thiamine diphosphate site; that span reads GA. N174 is a Mg(2+) binding site.

The protein belongs to the transketolase family. DXPS subfamily. As to quaternary structure, homodimer. Mg(2+) serves as cofactor. Requires thiamine diphosphate as cofactor.

It catalyses the reaction D-glyceraldehyde 3-phosphate + pyruvate + H(+) = 1-deoxy-D-xylulose 5-phosphate + CO2. It functions in the pathway metabolic intermediate biosynthesis; 1-deoxy-D-xylulose 5-phosphate biosynthesis; 1-deoxy-D-xylulose 5-phosphate from D-glyceraldehyde 3-phosphate and pyruvate: step 1/1. Functionally, catalyzes the acyloin condensation reaction between C atoms 2 and 3 of pyruvate and glyceraldehyde 3-phosphate to yield 1-deoxy-D-xylulose-5-phosphate (DXP). The protein is 1-deoxy-D-xylulose-5-phosphate synthase of Prochlorococcus marinus (strain MIT 9312).